Reading from the N-terminus, the 800-residue chain is Mitogen-activated protein kinase kinase kinase 20 (800 aa).

The residue at position 2 (S2) is an N-acetylserine. Phosphoserine; by autocatalysis occurs at positions 2, 3, and 7. One can recognise a Protein kinase domain in the interval 16–277; sequence LQFFENCGGG…SLPDKCNSFL (262 aa). Residues 22–30 and K45 each bind ATP; that span reads CGGGSFGSV. Catalysis depends on D133, which acts as the Proton acceptor. Position 161 is a phosphothreonine; by autocatalysis (T161). The residue at position 165 (S165) is a Phosphoserine; by autocatalysis. Phosphoserine is present on S275. Positions 287 to 308 are leucine-zipper; that stretch reads IEATLERLKKLERDLSFKEQEL. Position 302 is a phosphoserine; by autocatalysis (S302). Residues W339, E429, K434, D454, and S567 each carry the phosphoserine modification. One can recognise an SAM domain in the interval 339-410; it reads WTEDDVYCWV…KSAIEKLTHD (72 aa). T586 is modified (phosphothreonine; by autocatalysis). S587 is modified (phosphoserine; by autocatalysis). S593 and S599 each carry phosphoserine. T628 bears the Phosphothreonine mark. Residues S633, S637, and S648 each carry the phosphoserine modification. Residues S649 and S660 each carry the phosphoserine; by autocatalysis modification. A compositionally biased stretch (polar residues) spans 652–666; it reads LNSRDSGFSSGNTDT. The tract at residues 652 to 800 is disordered; the sequence is LNSRDSGFSS…RGDHRGWRNF (149 aa). T664 carries the post-translational modification Phosphothreonine; by autocatalysis. A compositionally biased stretch (basic and acidic residues) spans 667-678; the sequence is SSERGRYSDRSR. The segment at 670–713 is sensing domain (S); the sequence is RGRYSDRSRNKYGRGSISLNSSPRGRYSGKSQHSTPSRGRYPGK. S685 carries the post-translational modification Phosphoserine. Composition is skewed to polar residues over residues 686–706 and 717–726; these read ISLN…STPS and VSQSALNPHQ. Phosphoserine; by autocatalysis is present on residues S718 and S720. Phosphoserine is present on residues S727 and S733. Residues 728-738 are compositionally biased toward basic and acidic residues; sequence PDFKRSPRDLH. The residue at position 742 (T742) is a Phosphothreonine; by autocatalysis. Basic and acidic residues-rich tracts occupy residues 750–763 and 785–800; these read PETD…DSKV and TNKE…WRNF. The segment at 774–800 is C-terminal domain (CTD); it reads RKKPHRPSPAKTNKERARGDHRGWRNF.

It belongs to the protein kinase superfamily. STE Ser/Thr protein kinase family. MAP kinase kinase kinase subfamily. Homodimer. Interacts with ZNF33A. Component of a signaling complex containing at least AKAP13, PKN1, MAPK14, MAP3K20 and MAP2K3. Within this complex, AKAP13 interacts directly with PKN1, which in turn recruits MAPK14, MAP2K3 and MAP3K20. Interacts with EIF2AK4/GCN2; promoting EIF2AK4/GCN2 kinase activity. In terms of assembly, interacts with isoform ZAKbeta. As to quaternary structure, interacts with isoform ZAKalpha. Requires Mg(2+) as cofactor. Post-translationally, activated by phosphorylation by PKN1, followed by autophosphorylation on Thr-161 and Ser-165. Autophosphorylation in response to ribotoxic stress promotes dissociation from colliding ribosomes and activation. As to expression, ubiquitously expressed. Isoform ZAKbeta is the predominant form in all tissues examined, except for liver, in which isoform ZAKalpha is more highly expressed.

The protein localises to the cytoplasm. It is found in the nucleus. It catalyses the reaction L-seryl-[protein] + ATP = O-phospho-L-seryl-[protein] + ADP + H(+). It carries out the reaction L-threonyl-[protein] + ATP = O-phospho-L-threonyl-[protein] + ADP + H(+). Activated in response to stress, such as ribosomal stress, osmotic shock and ionizing radiation. Activated by phosphorylation by PKN1, followed by autophosphorylation on Thr-161 and Ser-165. Inhibited by nilotinib, sorafenib, dabrafenib, rebastinib and vemurafenib. Selectively inhibited by N-(3)-((1H-Pyrazolo[3,4-b]pyridin-5-yl)ethynyl)benzenesulfonamide compound 3h. Selectively inhibited by 1,2,3-triazole benzenesulfonamides. Stress-activated component of a protein kinase signal transduction cascade that promotes programmed cell death in response to various stress, such as ribosomal stress, osmotic shock and ionizing radiation. Acts by catalyzing phosphorylation of MAP kinase kinases, leading to activation of the JNK (MAPK8/JNK1, MAPK9/JNK2 and/or MAPK10/JNK3) and MAP kinase p38 (MAPK11, MAPK12, MAPK13 and/or MAPK14) pathways. Activates JNK through phosphorylation of MAP2K4/MKK4 and MAP2K7/MKK7, and MAP kinase p38 gamma (MAPK12) via phosphorylation of MAP2K3/MKK3 and MAP2K6/MKK6. Involved in stress associated with adrenergic stimulation: contributes to cardiac decompensation during periods of acute cardiac stress. May be involved in regulation of S and G2 cell cycle checkpoint by mediating phosphorylation of CHEK2. Its function is as follows. Key component of the stress-activated protein kinase signaling cascade in response to ribotoxic stress or UV-B irradiation. Acts as the proximal sensor of ribosome collisions during the ribotoxic stress response (RSR): directly binds to the ribosome by inserting its flexible C-terminus into the ribosomal intersubunit space, thereby acting as a sentinel for colliding ribosomes. Upon ribosome collisions, activates either the stress-activated protein kinase signal transduction cascade or the integrated stress response (ISR), leading to programmed cell death or cell survival, respectively. Dangerous levels of ribosome collisions trigger the autophosphorylation and activation of MAP3K20, which dissociates from colliding ribosomes and phosphorylates MAP kinase kinases, leading to activation of the JNK and MAP kinase p38 pathways that promote programmed cell death. Less dangerous levels of ribosome collisions trigger the integrated stress response (ISR): MAP3K20 activates EIF2AK4/GCN2 independently of its protein-kinase activity, promoting EIF2AK4/GCN2-mediated phosphorylation of EIF2S1/eIF-2-alpha. Also part of the stress-activated protein kinase signaling cascade triggering the NLRP1 inflammasome in response to UV-B irradiation: ribosome collisions activate MAP3K20, which directly phosphorylates NLRP1, leading to activation of the NLRP1 inflammasome and subsequent pyroptosis. NLRP1 is also phosphorylated by MAP kinase p38 downstream of MAP3K20. Also acts as a histone kinase by phosphorylating histone H3 at 'Ser-28' (H3S28ph). Functionally, isoform that lacks the C-terminal region that mediates ribosome-binding: does not act as a sensor of ribosome collisions in response to ribotoxic stress. May act as an antagonist of isoform ZAKalpha: interacts with isoform ZAKalpha, leading to decrease the expression of isoform ZAKalpha. The sequence is that of Mitogen-activated protein kinase kinase kinase 20 from Homo sapiens (Human).